Reading from the N-terminus, the 138-residue chain is Cysteine desulfuration protein SufE (138 aa).

The Cysteine persulfide intermediate role is filled by Cys-51.

The protein belongs to the SufE family. In terms of assembly, homodimer. Interacts with SufS.

Its subcellular location is the cytoplasm. It participates in cofactor biosynthesis; iron-sulfur cluster biosynthesis. In terms of biological role, participates in cysteine desulfuration mediated by SufS. Cysteine desulfuration mobilizes sulfur from L-cysteine to yield L-alanine and constitutes an essential step in sulfur metabolism for biosynthesis of a variety of sulfur-containing biomolecules. Functions as a sulfur acceptor for SufS, by mediating the direct transfer of the sulfur atom from the S-sulfanylcysteine of SufS, an intermediate product of cysteine desulfuration process. The sequence is that of Cysteine desulfuration protein SufE from Cronobacter sakazakii (strain ATCC BAA-894) (Enterobacter sakazakii).